Reading from the N-terminus, the 141-residue chain is Hemoglobin subunit alpha (141 aa).

The Globin domain occupies 2 to 141; it reads AFTACEKQTI…ICQELSSRYR (140 aa). Position 59 (His59) interacts with O2. His88 contacts heme b.

Belongs to the globin family. In terms of assembly, heterotetramer of two alpha chains and two beta chains. Red blood cells.

Functionally, involved in oxygen transport from gills to the various peripheral tissues. This chain is Hemoglobin subunit alpha (HBA), found in Mustelus griseus (Spotless smooth-hound).